Here is a 169-residue protein sequence, read N- to C-terminus: NADH-quinone oxidoreductase subunit B (169 aa).

Cys42, Cys43, Cys107, and Cys136 together coordinate [4Fe-4S] cluster.

The protein belongs to the complex I 20 kDa subunit family. NDH-1 is composed of 14 different subunits. Subunits NuoB, C, D, E, F, and G constitute the peripheral sector of the complex. [4Fe-4S] cluster serves as cofactor.

It is found in the cell inner membrane. It catalyses the reaction a quinone + NADH + 5 H(+)(in) = a quinol + NAD(+) + 4 H(+)(out). Functionally, NDH-1 shuttles electrons from NADH, via FMN and iron-sulfur (Fe-S) centers, to quinones in the respiratory chain. The immediate electron acceptor for the enzyme in this species is believed to be ubiquinone. Couples the redox reaction to proton translocation (for every two electrons transferred, four hydrogen ions are translocated across the cytoplasmic membrane), and thus conserves the redox energy in a proton gradient. The sequence is that of NADH-quinone oxidoreductase subunit B from Sulfurimonas denitrificans (strain ATCC 33889 / DSM 1251) (Thiomicrospira denitrificans (strain ATCC 33889 / DSM 1251)).